The sequence spans 121 residues: Large ribosomal subunit protein bL19 (121 aa).

This sequence belongs to the bacterial ribosomal protein bL19 family.

This protein is located at the 30S-50S ribosomal subunit interface and may play a role in the structure and function of the aminoacyl-tRNA binding site. This is Large ribosomal subunit protein bL19 from Chloroherpeton thalassium (strain ATCC 35110 / GB-78).